Here is a 282-residue protein sequence, read N- to C-terminus: Acetylglutamate kinase (282 aa).

Substrate-binding positions include 62-63 (GG), Arg-84, and Asn-178.

The protein belongs to the acetylglutamate kinase family. ArgB subfamily.

Its subcellular location is the cytoplasm. It catalyses the reaction N-acetyl-L-glutamate + ATP = N-acetyl-L-glutamyl 5-phosphate + ADP. It participates in amino-acid biosynthesis; L-arginine biosynthesis; N(2)-acetyl-L-ornithine from L-glutamate: step 2/4. Functionally, catalyzes the ATP-dependent phosphorylation of N-acetyl-L-glutamate. The sequence is that of Acetylglutamate kinase from Thermotoga sp. (strain RQ2).